The sequence spans 346 residues: Phenylalanine--tRNA ligase alpha subunit (346 aa).

Mg(2+) is bound at residue Glu261.

It belongs to the class-II aminoacyl-tRNA synthetase family. Phe-tRNA synthetase alpha subunit type 1 subfamily. As to quaternary structure, tetramer of two alpha and two beta subunits. Mg(2+) serves as cofactor.

The protein resides in the cytoplasm. The enzyme catalyses tRNA(Phe) + L-phenylalanine + ATP = L-phenylalanyl-tRNA(Phe) + AMP + diphosphate + H(+). This is Phenylalanine--tRNA ligase alpha subunit from Streptococcus agalactiae serotype III (strain NEM316).